A 366-amino-acid polypeptide reads, in one-letter code: DNA repair protein RAD51 homolog 3 (366 aa).

Positions 1–117 (MQRELVSFPL…LMKTTEVCGV (117 aa)) are required for Holliday junction resolution activity. Serine 11 carries the phosphoserine modification. The interaction with RAD51B, RAD51D and XRCC3 stretch occupies residues 70-127 (SVAGKKYTALELLEQEHTQGFIITFCSALDNILGGGIPLMKTTEVCGVPGVGKTQLCM). 116–123 (GVPGVGKT) is a binding site for ATP. The tract at residues 338–366 (RDAAVTASSSQTEGSSNLRKRSREPEEGC) is disordered. The segment covering 343–354 (TASSSQTEGSSN) has biased composition (polar residues). The Nuclear localization signal motif lies at 356–360 (RKRSR).

The protein belongs to the RecA family. RAD51 subfamily. As to quaternary structure, part of the RAD51 paralog protein complexes BCDX2 and CX3; the complexes have a ring-like structure arranged into a flat disc around a central channel. The BCDX2 complex consits of RAD51B, RAD51C, RAD51D and XRCC2; the CX3 complex consists of RAD51C and XRCC3. The BCDX2 subcomplex RAD51B:RAD51C interacts with RAD51. Interacts with SWSAP1; involved in homologous recombination repair. Interacts directly with PALB2 which may serve as a scaffold for a HR complex containing PALB2, BRCA2, RAD51C, RAD51 and XRCC3. Interacts with HELQ.

The protein resides in the nucleus. It is found in the cytoplasm. The protein localises to the perinuclear region. Its subcellular location is the mitochondrion. Its function is as follows. Essential for the homologous recombination (HR) pathway of DNA repair. Involved in the homologous recombination repair (HRR) pathway of double-stranded DNA breaks arising during DNA replication or induced by DNA-damaging agents. Part of the RAD51 paralog protein complexes BCDX2 and CX3 which act at different stages of the BRCA1-BRCA2-dependent HR pathway. Upon DNA damage, BCDX2 seems to act downstream of BRCA2 recruitment and upstream of RAD51 recruitment; CX3 seems to act downstream of RAD51 recruitment; both complexes bind predominantly to the intersection of the four duplex arms of the Holliday junction (HJ) and to junction of replication forks. The BCDX2 complex was originally reported to bind single-stranded DNA, single-stranded gaps in duplex DNA and specifically to nicks in duplex DNA. The BCDX2 subcomplex RAD51B:RAD51C exhibits single-stranded DNA-dependent ATPase activity suggesting an involvement in early stages of the HR pathway. Involved in RAD51 foci formation in response to DNA damage suggesting an involvement in early stages of HR probably in the invasion step. Has an early function in DNA repair in facilitating phosphorylation of the checkpoint kinase CHEK2 and thereby transduction of the damage signal, leading to cell cycle arrest and HR activation. Participates in branch migration and HJ resolution and thus is important for processing HR intermediates late in the DNA repair process; the function may be linked to the CX3 complex. Part of a PALB2-scaffolded HR complex containing BRCA2 and which is thought to play a role in DNA repair by HR. Protects RAD51 from ubiquitin-mediated degradation that is enhanced following DNA damage. Plays a role in regulating mitochondrial DNA copy number under conditions of oxidative stress in the presence of RAD51 and XRCC3. Contributes to DNA cross-link resistance, sister chromatid cohesion and genomic stability. Involved in maintaining centrosome number in mitosis. The sequence is that of DNA repair protein RAD51 homolog 3 (RAD51C) from Cricetulus griseus (Chinese hamster).